Here is a 292-residue protein sequence, read N- to C-terminus: Porphobilinogen deaminase (292 aa).

An S-(dipyrrolylmethanemethyl)cysteine modification is found at Cys236.

It belongs to the HMBS family. In terms of assembly, monomer. Requires dipyrromethane as cofactor.

It carries out the reaction 4 porphobilinogen + H2O = hydroxymethylbilane + 4 NH4(+). It functions in the pathway porphyrin-containing compound metabolism; protoporphyrin-IX biosynthesis; coproporphyrinogen-III from 5-aminolevulinate: step 2/4. Its function is as follows. Tetrapolymerization of the monopyrrole PBG into the hydroxymethylbilane pre-uroporphyrinogen in several discrete steps. This is Porphobilinogen deaminase from Wolbachia sp. subsp. Drosophila simulans (strain wRi).